We begin with the raw amino-acid sequence, 435 residues long: MSTPHINVIGAGLAGSEAAWQIAERGIAVHLYEMRPVKQTPAHHTDKFAELVCSNSLRGNSLTNAVGVLKEEMRRLNSVIIRSADRCSVPAGGALAVDRHEFAQAVTEAVREHPNVTVFTEEIQKIPDGPTVIATGPLTSKALSEQLKQLTGEEYLYFYDAAAPIIETDSINMDKVYLKSRYDKGEAAYLNCPMTEEEFDRFYEALISAETVPLKEFEKEVFFEGCMPVEVMAKRGKKTLLFGPMKPVGLEDPKTGKRPYAVVQLRRDNQSGTLYNIVGFQTHLKWGPQKEVIQLIPGLENAEIVRYGVMHRNTFINSPNLLKPTYQYKKRKDLFFAGQITGVEGYVESAAAGLVAGLNAARLVQSKELVVFPDTTMLGSMANYITTANSKNFQPMNANFGLLPPLDTRIKDKKTRYETLAGRALESIQNFVKKM.

An FAD-binding site is contributed by 10 to 15 (GAGLAG).

The protein belongs to the MnmG family. TrmFO subfamily. FAD serves as cofactor.

The protein localises to the cytoplasm. The catalysed reaction is uridine(54) in tRNA + (6R)-5,10-methylene-5,6,7,8-tetrahydrofolate + NADH + H(+) = 5-methyluridine(54) in tRNA + (6S)-5,6,7,8-tetrahydrofolate + NAD(+). It carries out the reaction uridine(54) in tRNA + (6R)-5,10-methylene-5,6,7,8-tetrahydrofolate + NADPH + H(+) = 5-methyluridine(54) in tRNA + (6S)-5,6,7,8-tetrahydrofolate + NADP(+). Its function is as follows. Catalyzes the folate-dependent formation of 5-methyl-uridine at position 54 (M-5-U54) in all tRNAs. This chain is Methylenetetrahydrofolate--tRNA-(uracil-5-)-methyltransferase TrmFO, found in Halalkalibacterium halodurans (strain ATCC BAA-125 / DSM 18197 / FERM 7344 / JCM 9153 / C-125) (Bacillus halodurans).